The following is a 301-amino-acid chain: Probable alpha-L-glutamate ligase (301 aa).

An ATP-grasp domain is found at 104 to 287; sequence LQLLSRRGIG…VAGMIIEYLE (184 aa). Residues Lys141, 178 to 179, Asp187, and 211 to 213 each bind ATP; these read EY and RSN. Asp248, Glu260, and Asn262 together coordinate Mg(2+). Mn(2+) is bound by residues Asp248, Glu260, and Asn262.

The protein belongs to the RimK family. Mg(2+) serves as cofactor. It depends on Mn(2+) as a cofactor.

This Pseudomonas savastanoi pv. phaseolicola (strain 1448A / Race 6) (Pseudomonas syringae pv. phaseolicola (strain 1448A / Race 6)) protein is Probable alpha-L-glutamate ligase.